A 215-amino-acid polypeptide reads, in one-letter code: Large ribosomal subunit protein uL16m (215 aa).

Residues 1 to 36 (MALQQYNKFPFFFSGILGPTRLNGLQMPPIQTMVRW) constitute a mitochondrion transit peptide.

Belongs to the universal ribosomal protein uL16 family. In terms of assembly, component of the mitochondrial large ribosomal subunit (mt-LSU). Mature yeast 74S mitochondrial ribosomes consist of a small (37S) and a large (54S) subunit. The 37S small subunit contains a 15S ribosomal RNA (15S mt-rRNA) and at least 32 different proteins. The 54S large subunit contains a 21S rRNA (21S mt-rRNA) and at least 45 different proteins.

The protein resides in the mitochondrion. In terms of biological role, component of the mitochondrial ribosome (mitoribosome), a dedicated translation machinery responsible for the synthesis of mitochondrial genome-encoded proteins, including at least some of the essential transmembrane subunits of the mitochondrial respiratory chain. The mitoribosomes are attached to the mitochondrial inner membrane and translation products are cotranslationally integrated into the membrane. The chain is Large ribosomal subunit protein uL16m (mrpl16) from Schizosaccharomyces pombe (strain 972 / ATCC 24843) (Fission yeast).